Here is a 146-residue protein sequence, read N- to C-terminus: Peptide methionine sulfoxide reductase MsrB (146 aa).

The 124-residue stretch at 6-129 (SAEAIAKLSA…NSASLRFVPK (124 aa)) folds into the MsrB domain. The Nucleophile role is filled by cysteine 118.

It belongs to the MsrB Met sulfoxide reductase family.

The enzyme catalyses L-methionyl-[protein] + [thioredoxin]-disulfide + H2O = L-methionyl-(R)-S-oxide-[protein] + [thioredoxin]-dithiol. The sequence is that of Peptide methionine sulfoxide reductase MsrB from Brucella melitensis biotype 1 (strain ATCC 23456 / CCUG 17765 / NCTC 10094 / 16M).